Consider the following 185-residue polypeptide: Acireductone dioxygenase (185 aa).

Fe(2+) is bound by residues histidine 96, histidine 98, glutamate 102, and histidine 140. Residues histidine 96, histidine 98, glutamate 102, and histidine 140 each coordinate Ni(2+).

This sequence belongs to the acireductone dioxygenase (ARD) family. As to quaternary structure, monomer. Fe(2+) is required as a cofactor. Ni(2+) serves as cofactor.

The enzyme catalyses 1,2-dihydroxy-5-(methylsulfanyl)pent-1-en-3-one + O2 = 3-(methylsulfanyl)propanoate + CO + formate + 2 H(+). It catalyses the reaction 1,2-dihydroxy-5-(methylsulfanyl)pent-1-en-3-one + O2 = 4-methylsulfanyl-2-oxobutanoate + formate + 2 H(+). It functions in the pathway amino-acid biosynthesis; L-methionine biosynthesis via salvage pathway; L-methionine from S-methyl-5-thio-alpha-D-ribose 1-phosphate: step 5/6. Catalyzes 2 different reactions between oxygen and the acireductone 1,2-dihydroxy-3-keto-5-methylthiopentene (DHK-MTPene) depending upon the metal bound in the active site. Fe-containing acireductone dioxygenase (Fe-ARD) produces formate and 2-keto-4-methylthiobutyrate (KMTB), the alpha-ketoacid precursor of methionine in the methionine recycle pathway. Ni-containing acireductone dioxygenase (Ni-ARD) produces methylthiopropionate, carbon monoxide and formate, and does not lie on the methionine recycle pathway. The sequence is that of Acireductone dioxygenase from Hahella chejuensis (strain KCTC 2396).